The sequence spans 64 residues: MPKNKSHSGASKRFKITGSGKVLRERAGKRHLLEHKSSRVTRRLTGNAEMAPGDAAKIKKLLGK.

Belongs to the bacterial ribosomal protein bL35 family.

This Streptomyces coelicolor (strain ATCC BAA-471 / A3(2) / M145) protein is Large ribosomal subunit protein bL35.